A 193-amino-acid chain; its full sequence is Putative histone H2B type 2-C (193 aa).

Low complexity predominate over residues 1-12 (MPEPAKFAPAPK). A disordered region spans residues 1–33 (MPEPAKFAPAPKKGSKKAVTKAQKKDGKKRKRS). Proline 2 is subject to N-acetylproline. Lysine 6 carries the post-translational modification N6-(2-hydroxyisobutyryl)lysine; alternate. N6-(beta-hydroxybutyryl)lysine; alternate occurs at positions 6 and 12. N6-acetyllysine; alternate is present on residues lysine 6, lysine 12, and lysine 13. Position 6 is an N6-butyryllysine; alternate (lysine 6). Lysine 6, lysine 12, and lysine 13 each carry N6-crotonyllysine; alternate. 2 positions are modified to N6-lactoyllysine; alternate: lysine 6 and lysine 12. A Glycyl lysine isopeptide (Lys-Gly) (interchain with G-Cter in SUMO2); alternate cross-link involves residue lysine 6. At lysine 13 the chain carries N6-(2-hydroxyisobutyryl)lysine; alternate. Position 15 is a phosphoserine; by STK4/MST1 (serine 15). 4 positions are modified to N6-acetyllysine; alternate: lysine 16, lysine 17, lysine 21, and lysine 24. 4 positions are modified to N6-crotonyllysine; alternate: lysine 16, lysine 17, lysine 21, and lysine 24. N6-lactoyllysine; alternate occurs at positions 16, 17, 21, and 24. An N6-(beta-hydroxybutyryl)lysine; alternate mark is found at lysine 17 and lysine 21. Lysine 17 is subject to N6-glutaryllysine; alternate. Residues lysine 21 and lysine 24 each carry the N6-(2-hydroxyisobutyryl)lysine; alternate modification. Lysine 21 carries the post-translational modification N6-butyryllysine; alternate. Lysine 21 participates in a covalent cross-link: Glycyl lysine isopeptide (Lys-Gly) (interchain with G-Cter in SUMO2); alternate. Lysine 25 is subject to N6-(2-hydroxyisobutyryl)lysine. An N6-(2-hydroxyisobutyryl)lysine; alternate modification is found at lysine 35. At lysine 35 the chain carries N6-(beta-hydroxybutyryl)lysine; alternate. Residue lysine 35 is modified to N6-crotonyllysine; alternate. Lysine 35 carries the N6-glutaryllysine; alternate modification. N6-succinyllysine; alternate is present on lysine 35. Lysine 35 is covalently cross-linked (Glycyl lysine isopeptide (Lys-Gly) (interchain with G-Cter in ubiquitin); alternate). Serine 37 is subject to Phosphoserine; by AMPK. N6-(2-hydroxyisobutyryl)lysine; alternate is present on residues lysine 44, lysine 47, and lysine 58. Lysine 44 is subject to N6-lactoyllysine; alternate. Residues lysine 44 and lysine 47 each carry the N6-glutaryllysine; alternate modification. Lysine 47 carries the post-translational modification N6-methyllysine; alternate. Lysine 58 carries the post-translational modification N6,N6-dimethyllysine; alternate. Arginine 80 is modified (dimethylated arginine). An N6-(2-hydroxyisobutyryl)lysine; alternate modification is found at lysine 86. Lysine 86 carries the N6-(beta-hydroxybutyryl)lysine; alternate modification. Lysine 86 is subject to N6-acetyllysine; alternate. Lysine 86 carries the N6-lactoyllysine; alternate modification. Lysine 86 carries the post-translational modification N6,N6,N6-trimethyllysine; alternate. Arginine 87 and arginine 93 each carry omega-N-methylarginine. The disordered stretch occupies residues 111–136 (PCPRAPRRSPSTPAPSESLPGPGARS).

The protein belongs to the histone H2B family. In terms of assembly, the nucleosome is a histone octamer containing two molecules each of H2A, H2B, H3 and H4 assembled in one H3-H4 heterotetramer and two H2A-H2B heterodimers. The octamer wraps approximately 147 bp of DNA. Phosphorylation at Ser-37 (H2BS36ph) by AMPK in response to stress promotes transcription. Phosphorylated on Ser-15 (H2BS14ph) by STK4/MST1 during apoptosis; which facilitates apoptotic chromatin condensation. Also phosphorylated on Ser-15 in response to DNA double strand breaks (DSBs), and in correlation with somatic hypermutation and immunoglobulin class-switch recombination. In terms of processing, crotonylation (Kcr) is specifically present in male germ cells and marks testis-specific genes in post-meiotic cells, including X-linked genes that escape sex chromosome inactivation in haploid cells. Crotonylation marks active promoters and enhancers and confers resistance to transcriptional repressors. It is also associated with post-meiotically activated genes on autosomes. Post-translationally, lactylated in macrophages by EP300/P300 by using lactoyl-CoA directly derived from endogenous or exogenous lactate, leading to stimulates gene transcription.

It localises to the nucleus. The protein resides in the chromosome. Functionally, core component of nucleosome. Nucleosomes wrap and compact DNA into chromatin, limiting DNA accessibility to the cellular machineries which require DNA as a template. Histones thereby play a central role in transcription regulation, DNA repair, DNA replication and chromosomal stability. DNA accessibility is regulated via a complex set of post-translational modifications of histones, also called histone code, and nucleosome remodeling. The sequence is that of Putative histone H2B type 2-C from Homo sapiens (Human).